Here is a 124-residue protein sequence, read N- to C-terminus: Ribonuclease P protein component (124 aa).

It belongs to the RnpA family. In terms of assembly, consists of a catalytic RNA component (M1 or rnpB) and a protein subunit.

The enzyme catalyses Endonucleolytic cleavage of RNA, removing 5'-extranucleotides from tRNA precursor.. Functionally, RNaseP catalyzes the removal of the 5'-leader sequence from pre-tRNA to produce the mature 5'-terminus. It can also cleave other RNA substrates such as 4.5S RNA. The protein component plays an auxiliary but essential role in vivo by binding to the 5'-leader sequence and broadening the substrate specificity of the ribozyme. In Maridesulfovibrio salexigens (strain ATCC 14822 / DSM 2638 / NCIMB 8403 / VKM B-1763) (Desulfovibrio salexigens), this protein is Ribonuclease P protein component.